We begin with the raw amino-acid sequence, 248 residues long: Flagellar L-ring protein (248 aa).

A signal peptide spans 1 to 23; the sequence is MRHAFRHSVRTLGLLGLLPVLSA. Residue Cys24 is the site of N-palmitoyl cysteine attachment. Cys24 is lipidated: S-diacylglycerol cysteine.

It belongs to the FlgH family. The basal body constitutes a major portion of the flagellar organelle and consists of four rings (L,P,S, and M) mounted on a central rod.

It localises to the cell outer membrane. The protein resides in the bacterial flagellum basal body. Assembles around the rod to form the L-ring and probably protects the motor/basal body from shearing forces during rotation. This Gluconobacter oxydans (strain 621H) (Gluconobacter suboxydans) protein is Flagellar L-ring protein.